Reading from the N-terminus, the 344-residue chain is Cytochrome c biogenesis protein CcsA (344 aa).

The next 8 helical transmembrane spans lie at Asn-21–Pro-41, Leu-45–Leu-65, Leu-80–His-100, Trp-106–Leu-126, Val-151–Ile-171, Leu-252–Asn-272, Trp-287–Trp-307, and Ala-313–Leu-333.

This sequence belongs to the CcmF/CycK/Ccl1/NrfE/CcsA family. As to quaternary structure, may interact with ccs1.

Its subcellular location is the cellular thylakoid membrane. Functionally, required during biogenesis of c-type cytochromes (cytochrome c6 and cytochrome f) at the step of heme attachment. This chain is Cytochrome c biogenesis protein CcsA, found in Synechococcus sp. (strain JA-3-3Ab) (Cyanobacteria bacterium Yellowstone A-Prime).